The following is a 522-amino-acid chain: Sensory neuron membrane protein 1 (522 aa).

Residues 1 to 11 (MQLAKPLKYAA) are Cytoplasmic-facing. A helical membrane pass occupies residues 12–32 (ISGIVAFVGLMFGWVIFPAIL). Topologically, residues 33-458 (KSQLKKEMAL…SQLFIPKRVV (426 aa)) are extracellular. N-linked (GlcNAc...) asparagine glycosylation is found at Asn-67, Asn-105, and Asn-229. Intrachain disulfides connect Cys-268–Cys-333, Cys-297–Cys-352, and Cys-335–Cys-341. N-linked (GlcNAc...) asparagine glycosylation occurs at Asn-440. A helical transmembrane segment spans residues 459–479 (SVVCWCMISFGSLGVIAAVIF). Residues 480–522 (HFKGDIMHLAVAGDNSVSKIKPENDENKEVGVMGQNQEPAKVM) lie on the Cytoplasmic side of the membrane. Positions 500-522 (KPENDENKEVGVMGQNQEPAKVM) are disordered. The segment covering 513 to 522 (GQNQEPAKVM) has biased composition (polar residues).

It belongs to the CD36 family. As to expression, principal component of the olfactory cilia membrane. Detected in both male and female antennae but not present in leg, abdomen, thorax or head.

Its subcellular location is the cell membrane. Functionally, plays an olfactory role that is not restricted to pheromone sensitivity. The polypeptide is Sensory neuron membrane protein 1 (Bombyx mori (Silk moth)).